The chain runs to 212 residues: Uridine kinase (212 aa).

Position 13-20 (13-20 (GASASGKS)) interacts with ATP.

This sequence belongs to the uridine kinase family.

It is found in the cytoplasm. The catalysed reaction is uridine + ATP = UMP + ADP + H(+). It carries out the reaction cytidine + ATP = CMP + ADP + H(+). It participates in pyrimidine metabolism; CTP biosynthesis via salvage pathway; CTP from cytidine: step 1/3. It functions in the pathway pyrimidine metabolism; UMP biosynthesis via salvage pathway; UMP from uridine: step 1/1. This Shewanella putrefaciens (strain CN-32 / ATCC BAA-453) protein is Uridine kinase.